The sequence spans 96 residues: Protein YddL (96 aa).

The first 21 residues, 1-21 (MKLKIVAVVVTGLLAANVAHA), serve as a signal peptide directing secretion.

This Escherichia coli (strain K12) protein is Protein YddL (yddL).